A 199-amino-acid polypeptide reads, in one-letter code: dITP/XTP pyrophosphatase (199 aa).

12 to 17 is a binding site for substrate; sequence SGNAGK. The active-site Proton acceptor is the D73. D73 serves as a coordination point for Mg(2+). Substrate contacts are provided by residues S74, 157–160, K180, and 185–186; these read FGYD and HR.

This sequence belongs to the HAM1 NTPase family. As to quaternary structure, homodimer. Mg(2+) is required as a cofactor.

It carries out the reaction XTP + H2O = XMP + diphosphate + H(+). The catalysed reaction is dITP + H2O = dIMP + diphosphate + H(+). It catalyses the reaction ITP + H2O = IMP + diphosphate + H(+). Pyrophosphatase that catalyzes the hydrolysis of nucleoside triphosphates to their monophosphate derivatives, with a high preference for the non-canonical purine nucleotides XTP (xanthosine triphosphate), dITP (deoxyinosine triphosphate) and ITP. Seems to function as a house-cleaning enzyme that removes non-canonical purine nucleotides from the nucleotide pool, thus preventing their incorporation into DNA/RNA and avoiding chromosomal lesions. The chain is dITP/XTP pyrophosphatase from Neisseria meningitidis serogroup A / serotype 4A (strain DSM 15465 / Z2491).